Reading from the N-terminus, the 207-residue chain is Ras-related protein Rab7A (207 aa).

GTP contacts are provided by residues 15–22 (GDSGVGKT), 63–67 (DTAGQ), and 125–128 (NKID). Residues Cys205 and Cys207 are each lipidated (S-geranylgeranyl cysteine). Residue Cys207 is modified to Cysteine methyl ester.

The protein belongs to the small GTPase superfamily. Rab family.

The protein localises to the cell membrane. Its function is as follows. Protein transport. Probably involved in vesicular traffic. The sequence is that of Ras-related protein Rab7A from Mesembryanthemum crystallinum (Common ice plant).